We begin with the raw amino-acid sequence, 520 residues long: Nuclear GTP-binding protein NUG1 (520 aa).

Basic residues-rich tracts occupy residues 1 to 13 (MRVR…RTST) and 21 to 34 (KKAS…KKMA). The disordered stretch occupies residues 1-53 (MRVRKRQSRRTSTKLKEGIKKKASAHRKKEKKMAKKDVTWRSRSKKDPGIPSN). Over residues 35–48 (KKDVTWRSRSKKDP) the composition is skewed to basic and acidic residues. One can recognise a CP-type G domain in the interval 165-343 (YDKIFKSVID…ILDSPGICFP (179 aa)). Residues 213–216 (NKVD), 287–294 (GYPNVGKS), and 336–339 (DSPG) contribute to the GTP site. S337 bears the Phosphoserine mark.

The protein belongs to the TRAFAC class YlqF/YawG GTPase family.

Its subcellular location is the nucleus. Functionally, GTPase required for 60S ribosomal subunit export to the cytoplasm. This Saccharomyces cerevisiae (strain ATCC 204508 / S288c) (Baker's yeast) protein is Nuclear GTP-binding protein NUG1 (NUG1).